A 79-amino-acid polypeptide reads, in one-letter code: Dolichyl-diphosphooligosaccharide--protein glycosyltransferase subunit TMEM258 (79 aa).

The next 2 membrane-spanning stretches (helical) occupy residues 19-39 (PLLT…FTMI) and 55-75 (FIAA…LLWV).

The protein belongs to the OST5 family. In terms of assembly, component of the oligosaccharyltransferase (OST) complex.

It is found in the membrane. The protein operates within protein modification; protein glycosylation. Subunit of the oligosaccharyl transferase (OST) complex that catalyzes the initial transfer of a defined glycan (Glc(3)Man(9)GlcNAc(2) in eukaryotes) from the lipid carrier dolichol-pyrophosphate to an asparagine residue within an Asn-X-Ser/Thr consensus motif in nascent polypeptide chains, the first step in protein N-glycosylation. N-glycosylation occurs cotranslationally and the complex associates with the Sec61 complex at the channel-forming translocon complex that mediates protein translocation across the endoplasmic reticulum (ER). All subunits are required for a maximal enzyme activity. This is Dolichyl-diphosphooligosaccharide--protein glycosyltransferase subunit TMEM258 from Caenorhabditis elegans.